The chain runs to 97 residues: Large ribosomal subunit protein uL23 (97 aa).

Belongs to the universal ribosomal protein uL23 family. In terms of assembly, part of the 50S ribosomal subunit. Contacts protein L29, and trigger factor when it is bound to the ribosome.

Functionally, one of the early assembly proteins it binds 23S rRNA. One of the proteins that surrounds the polypeptide exit tunnel on the outside of the ribosome. Forms the main docking site for trigger factor binding to the ribosome. This is Large ribosomal subunit protein uL23 from Thermoanaerobacter pseudethanolicus (strain ATCC 33223 / 39E) (Clostridium thermohydrosulfuricum).